Reading from the N-terminus, the 500-residue chain is Betaine aldehyde dehydrogenase, chloroplastic (500 aa).

A chloroplast-targeting transit peptide spans 1-7 (MSMPIPS). 238–243 (GSSATG) lines the NAD(+) pocket. The active-site Proton acceptor is E260. C294 acts as the Nucleophile in catalysis.

This sequence belongs to the aldehyde dehydrogenase family. Homodimer.

The protein localises to the plastid. The protein resides in the chloroplast. The catalysed reaction is betaine aldehyde + NAD(+) + H2O = glycine betaine + NADH + 2 H(+). It participates in amine and polyamine biosynthesis; betaine biosynthesis via choline pathway; betaine from betaine aldehyde: step 1/1. In Beta vulgaris (Sugar beet), this protein is Betaine aldehyde dehydrogenase, chloroplastic.